The following is a 259-amino-acid chain: Snake venom serine proteinase 2 (259 aa).

An N-terminal signal peptide occupies residues 1–18 (MVLIRVLANLLILQLSYA). Positions 19 to 24 (QKSSEL) are excised as a propeptide. A Peptidase S1 domain is found at 25-250 (IFGGRPCNRN…HLDWIQSIIA (226 aa)). Intrachain disulfides connect Cys-31/Cys-162, Cys-49/Cys-65, Cys-97/Cys-257, Cys-141/Cys-211, Cys-173/Cys-190, and Cys-201/Cys-226. Catalysis depends on charge relay system residues His-64 and Asp-109. Ser-205 acts as the Charge relay system in catalysis.

This sequence belongs to the peptidase S1 family. Snake venom subfamily. As to quaternary structure, monomer. In terms of tissue distribution, expressed by the venom gland.

The protein resides in the secreted. In terms of biological role, snake venom serine protease that may act in the hemostasis system of the prey. The protein is Snake venom serine proteinase 2 of Crotalus adamanteus (Eastern diamondback rattlesnake).